The chain runs to 293 residues: Alcohol dehydrogenase 1 (293 aa).

Residues cysteine 26, cysteine 29, cysteine 32, cysteine 40, and cysteine 104 each coordinate Zn(2+). Residues 129-134, aspartate 153, arginine 158, threonine 199, valine 222, 222-224, and phenylalanine 249 contribute to the NAD(+) site; these read GLGAVG and VGV.

This sequence belongs to the zinc-containing alcohol dehydrogenase family. As to quaternary structure, homodimer. It depends on Zn(2+) as a cofactor.

The protein localises to the cytoplasm. It carries out the reaction a primary alcohol + NAD(+) = an aldehyde + NADH + H(+). The catalysed reaction is a secondary alcohol + NAD(+) = a ketone + NADH + H(+). This chain is Alcohol dehydrogenase 1 (ADH1), found in Zea luxurians (Guatemalan teosinte).